Consider the following 368-residue polypeptide: Cytoskeleton protein RodZ (368 aa).

The Cytoplasmic segment spans residues 1 to 111 (MNTEASQDQT…LGKKHKKRDG (111 aa)). An HTH cro/C1-type domain is found at 19-79 (LRQARESLGL…KLVHLPEDEL (61 aa)). Residues 30-49 (QQTVAERLCLKVSTIRDIEE) constitute a DNA-binding region (H-T-H motif). A helical; Signal-anchor for type II membrane protein membrane pass occupies residues 112–132 (WLMSFTWLIVLVVLGLTGAWW). The Periplasmic portion of the chain corresponds to 133 to 368 (WQNHQAQQAE…RVARLTVGVE (236 aa)). Residues 151 to 243 (SAQLSQNGGQ…STEPVDTANT (93 aa)) form a disordered region. Low complexity predominate over residues 193–221 (STSAVTNSATTSSATTSSVPTTSSVPKTT). A compositionally biased stretch (polar residues) spans 229–243 (VPKTNSTEPVDTANT).

Belongs to the RodZ family.

It localises to the cell inner membrane. In terms of biological role, cytoskeletal protein that is involved in cell-shape control through regulation of the length of the long axis. This Yersinia pseudotuberculosis serotype O:3 (strain YPIII) protein is Cytoskeleton protein RodZ.